We begin with the raw amino-acid sequence, 294 residues long: ATP synthase gamma chain (294 aa).

It belongs to the ATPase gamma chain family. In terms of assembly, F-type ATPases have 2 components, CF(1) - the catalytic core - and CF(0) - the membrane proton channel. CF(1) has five subunits: alpha(3), beta(3), gamma(1), delta(1), epsilon(1). CF(0) has three main subunits: a, b and c.

Its subcellular location is the cell inner membrane. Its function is as follows. Produces ATP from ADP in the presence of a proton gradient across the membrane. The gamma chain is believed to be important in regulating ATPase activity and the flow of protons through the CF(0) complex. This chain is ATP synthase gamma chain, found in Campylobacter jejuni (strain RM1221).